The sequence spans 379 residues: Putative thylakoid lumen peptidyl-prolyl cis-trans isomerase sll0408 (379 aa).

The N-terminal stretch at M1–A33 is a signal peptide. The region spanning G190–N378 is the PPIase cyclophilin-type domain.

The protein localises to the cellular thylakoid lumen. The catalysed reaction is [protein]-peptidylproline (omega=180) = [protein]-peptidylproline (omega=0). PPIases accelerate the folding of proteins. It catalyzes the cis-trans isomerization of proline imidic peptide bonds in oligopeptides. Required for the assembly and stabilization of PSII. In Synechocystis sp. (strain ATCC 27184 / PCC 6803 / Kazusa), this protein is Putative thylakoid lumen peptidyl-prolyl cis-trans isomerase sll0408.